The following is a 316-amino-acid chain: MQRRTRGIDTGLLLLLSQVFHIGINNIPPVTLATLAVNVWFFLNPWKPLYHSCISVEKCYQQNDWQRLLLSPVHHGDDWHLYFNMVSMLWKGVKLEKRLGSRWFAYIIATFSLLTGVVYLLLQFASAELMNQPDFKRNCAVGFSGVLFALKVLSNHYCPGGFVNILGFPVPNRFACWAELAAIHFCTPGTSFAGHLAGILVGLMYTQGPLKKIMDACAGIFISNAGSSGQQYHFNNAGPSGYQNRYTDGRPVNYEATYRNYDIYTAGLSEEEQLERALRASIWDRGNTRNGPIPYGFRLPPEEEMRRQRLHRFDGQ.

Residues 1–21 are Cytoplasmic-facing; it reads MQRRTRGIDTGLLLLLSQVFH. Residues 22–42 traverse the membrane as a helical segment; sequence IGINNIPPVTLATLAVNVWFF. At 43–103 the chain is on the extracellular side; the sequence is LNPWKPLYHS…KLEKRLGSRW (61 aa). A helical transmembrane segment spans residues 104–124; sequence FAYIIATFSLLTGVVYLLLQF. Over 125-137 the chain is Cytoplasmic; sequence ASAELMNQPDFKR. The helical transmembrane segment at 138 to 154 threads the bilayer; that stretch reads NCAVGFSGVLFALKVLS. Catalysis depends on Ser144, which acts as the Nucleophile. Residues 155 to 182 lie on the Extracellular side of the membrane; that stretch reads NHYCPGGFVNILGFPVPNRFACWAELAA. The helical transmembrane segment at 183 to 203 threads the bilayer; that stretch reads IHFCTPGTSFAGHLAGILVGL. Residue His195 is part of the active site. Residues 204-316 lie on the Cytoplasmic side of the membrane; the sequence is MYTQGPLKKI…RQRLHRFDGQ (113 aa). The tract at residues 269–284 is ubiquitin-binding domain (UBD); it reads SEEEQLERALRASIWD. Residues 301–316 are VCP/p97-interacting motif (VIM); it reads PEEEMRRQRLHRFDGQ.

This sequence belongs to the peptidase S54 family. As to quaternary structure, interacts with BIK and STEAP3. Interacts (via C-terminal domain) with VCP. Interacts with ubiquitin and ubiquitinated proteins. Expressed in intestine, lung, brain, kidney, epididymis and testis.

The protein resides in the endoplasmic reticulum membrane. It is found in the mitochondrion membrane. The catalysed reaction is Cleaves type-1 transmembrane domains using a catalytic dyad composed of serine and histidine that are contributed by different transmembrane domains.. Its activity is regulated as follows. Inhibited by aprotinin. In terms of biological role, intramembrane-cleaving serine protease that cleaves single transmembrane or multi-pass membrane proteins in the hydrophobic plane of the membrane, luminal loops and juxtamembrane regions. Involved in regulated intramembrane proteolysis and the subsequent release of functional polypeptides from their membrane anchors. Functional component of endoplasmic reticulum-associated degradation (ERAD) for misfolded membrane proteins. Required for the degradation process of some specific misfolded endoplasmic reticulum (ER) luminal proteins. Participates in the transfer of misfolded proteins from the ER to the cytosol, where they are destroyed by the proteasome in a ubiquitin-dependent manner. Functions in BIK, MPZ, PKD1, PTCRA, RHO, STEAP3 and TRAC processing. Involved in the regulation of exosomal secretion; inhibits the TSAP6-mediated secretion pathway. Involved in the regulation of apoptosis; modulates BIK-mediated apoptotic activity. Also plays a role in the regulation of spermatogenesis; inhibits apoptotic activity in spermatogonia. This Rattus norvegicus (Rat) protein is Rhomboid-related protein 4 (Rhbdd1).